Here is a 230-residue protein sequence, read N- to C-terminus: PKHD-type hydroxylase PD_1553 (230 aa).

The region spanning 78–182 (RTLPPRFNRY…RIASFFWVQS (105 aa)) is the Fe2OG dioxygenase domain. Fe cation contacts are provided by His96, Asp98, and His163. A 2-oxoglutarate-binding site is contributed by Arg173.

Requires Fe(2+) as cofactor. It depends on L-ascorbate as a cofactor.

The protein is PKHD-type hydroxylase PD_1553 of Xylella fastidiosa (strain Temecula1 / ATCC 700964).